Consider the following 715-residue polypeptide: MDTSSKENAHLFHKNSAQPAGGPSFTVGYPSTEEARPCCGKLKVFLGALSFVYFAKALAEGYLKSTVTQIERRFEIPSSLVGIIDGSFEIGNLLVITFVSYFGAKLHRPKIIGAGCLVMGFGTMLIAVPQFFMEKYSYEKYERYSPSSNVTPSISPCYLESSSPSPSSILGKSQNKISHECVGDSSSSMWVYVFLGNLLRGLGETPIQPLGIAYLDDFASEDNAAFYIGCVQTVAIIGPIFGFLLGSLCAKLYVDIGFVNLDHITITPKDPQWVGAWWLGYLIAGFLSLLAAVPFWCLPKTLPRSQSRENSGSTSEKSKFIDDPIHYQMAPGDDKMKIMEMAKDFLPSLKTLFRNPVYILYLCASTVQFNSLFGMVTYKPKYIEQQYGQSSSKANFVIGLINIPAVALGIFSGGIVMKKFRLGICEATKLYLGSSVFGYLLFLSLFALGCENSSVAGLTVSYQGTKPVSYHERALFSDCNSRCKCSDSKWEPMCGDNGITYVSACLAGCQSSSRSGKNIIFSNCTCVGFAAPKSGNWSGMMGRCQKDNGCSQMFLYFLVISVITSYTLSLGGIPGYILLLRCIQPQLKSFALGIYTLAVRVLAGIPAPVYFGVLIDTSCLKWGFKKCGSRGSCRLYDSHAFRHIYLGLTTLLGTVSVFLSMAVLFVLKKKYVSKHSSLITTREKIGMSSSIKKETCAARDRGLQPKYWPGKETRL.

The Cytoplasmic portion of the chain corresponds to 1–43 (MDTSSKENAHLFHKNSAQPAGGPSFTVGYPSTEEARPCCGKLK). A helical membrane pass occupies residues 44–63 (VFLGALSFVYFAKALAEGYL). Residues 64 to 82 (KSTVTQIERRFEIPSSLVG) lie on the Extracellular side of the membrane. The helical transmembrane segment at 83–103 (IIDGSFEIGNLLVITFVSYFG) threads the bilayer. At 104 to 109 (AKLHRP) the chain is on the cytoplasmic side. Residues 110 to 134 (KIIGAGCLVMGFGTMLIAVPQFFME) form a helical membrane-spanning segment. Topologically, residues 135–187 (KYSYEKYERYSPSSNVTPSISPCYLESSSPSPSSILGKSQNKISHECVGDSSS) are extracellular. A helical transmembrane segment spans residues 188 to 216 (SMWVYVFLGNLLRGLGETPIQPLGIAYLD). Residues 217–235 (DFASEDNAAFYIGCVQTVA) lie on the Cytoplasmic side of the membrane. A helical transmembrane segment spans residues 236-256 (IIGPIFGFLLGSLCAKLYVDI). At 257 to 274 (GFVNLDHITITPKDPQWV) the chain is on the extracellular side. A helical transmembrane segment spans residues 275–299 (GAWWLGYLIAGFLSLLAAVPFWCLP). At 300–351 (KTLPRSQSRENSGSTSEKSKFIDDPIHYQMAPGDDKMKIMEMAKDFLPSLKT) the chain is on the cytoplasmic side. The chain crosses the membrane as a helical span at residues 352–373 (LFRNPVYILYLCASTVQFNSLF). Residues 374 to 393 (GMVTYKPKYIEQQYGQSSSK) are Extracellular-facing. A helical transmembrane segment spans residues 394-417 (ANFVIGLINIPAVALGIFSGGIVM). Residues 418-421 (KKFR) are Cytoplasmic-facing. The helical transmembrane segment at 422–445 (LGICEATKLYLGSSVFGYLLFLSL) threads the bilayer. The Extracellular segment spans residues 446–557 (FALGCENSSV…NGCSQMFLYF (112 aa)). An N-linked (GlcNAc...) asparagine glycan is attached at Asn452. The Kazal-like domain occupies 473–528 (RALFSDCNSRCKCSDSKWEPMCGDNGITYVSACLAGCQSSSRSGKNIIFSNCTCVG). 3 disulfides stabilise this stretch: Cys479-Cys509, Cys485-Cys505, and Cys494-Cys526. N-linked (GlcNAc...) asparagine glycosylation is found at Asn523 and Asn536. Residues 558–580 (LVISVITSYTLSLGGIPGYILLL) traverse the membrane as a helical segment. The Cytoplasmic segment spans residues 581-589 (RCIQPQLKS). The helical transmembrane segment at 590 to 615 (FALGIYTLAVRVLAGIPAPVYFGVLI) threads the bilayer. Residues 616–649 (DTSCLKWGFKKCGSRGSCRLYDSHAFRHIYLGLT) are Extracellular-facing. Residues 650–667 (TLLGTVSVFLSMAVLFVL) traverse the membrane as a helical segment. Residues 668-715 (KKKYVSKHSSLITTREKIGMSSSIKKETCAARDRGLQPKYWPGKETRL) lie on the Cytoplasmic side of the membrane.

It belongs to the organo anion transporter (TC 2.A.60) family. As to expression, widely expressed throughout the brain except in the cerebellum. Not detected in kidney, heart, lung, skeletal muscle, spleen, liver, nor testis. Highly expressed in cerebral microvessels throughout the brain and in the choroid plexus (at mRNA and protein level).

Its subcellular location is the cell membrane. It carries out the reaction 3,3',5'-triiodo-L-thyronine(out) = 3,3',5'-triiodo-L-thyronine(in). The catalysed reaction is L-thyroxine(out) = L-thyroxine(in). The enzyme catalyses L-thyroxine sulfate(out) = L-thyroxine sulfate(in). It catalyses the reaction 17beta-estradiol 17-O-(beta-D-glucuronate)(out) = 17beta-estradiol 17-O-(beta-D-glucuronate)(in). It carries out the reaction 3,3',5-triiodo-L-thyronine(out) = 3,3',5-triiodo-L-thyronine(in). Mediates the Na(+)-independent high affinity transport of thyroid hormones at the plasma membrane of brain capillary endothelial cells. The transport activity of substrates L-thyroxine (T4) and 3,3',5'-triiodo-L-thyronine (reverse T3, rT3) is much greater than that of 3,3',5-triiodo-L-thyronine (T3). The prehormone, T4, is the major form in the circulating blood and is converted to the active form, T3, by the iodothyronine-deiodinase in peripheral organs. T3 plays an essential role in brain development via binding to specific nuclear receptors (thyroid hormone receptor). Also transports organic anions such as the conjugated steroid 17-beta-glucuronosyl estradiol (17beta-estradiol 17-O-(beta-D-glucuronate)). Transports T4 and estrone-3-sulfate in a pH-insensitive manner. May serve as a drug efflux system at the blood brain barrier. The chain is Solute carrier organic anion transporter family member 1C1 (Slco1c1) from Mus musculus (Mouse).